A 332-amino-acid chain; its full sequence is tRNA-dihydrouridine synthase B (332 aa).

FMN-binding positions include 19–21 (PMA) and glutamine 73. Cysteine 103 acts as the Proton donor in catalysis. FMN is bound by residues lysine 142, 203–205 (NGD), and 227–228 (GR).

The protein belongs to the Dus family. DusB subfamily. The cofactor is FMN.

It catalyses the reaction a 5,6-dihydrouridine in tRNA + NAD(+) = a uridine in tRNA + NADH + H(+). The enzyme catalyses a 5,6-dihydrouridine in tRNA + NADP(+) = a uridine in tRNA + NADPH + H(+). In terms of biological role, catalyzes the synthesis of 5,6-dihydrouridine (D), a modified base found in the D-loop of most tRNAs, via the reduction of the C5-C6 double bond in target uridines. This Pseudomonas aeruginosa (strain ATCC 15692 / DSM 22644 / CIP 104116 / JCM 14847 / LMG 12228 / 1C / PRS 101 / PAO1) protein is tRNA-dihydrouridine synthase B.